The sequence spans 313 residues: Probable cell division protein WhiA (313 aa).

The H-T-H motif DNA-binding region spans 274–308; that stretch reads SLKELGELVPGGPISKSGVNHRLRKLNAYADELRA.

Belongs to the WhiA family.

Functionally, involved in cell division and chromosome segregation. This is Probable cell division protein WhiA from Limosilactobacillus reuteri subsp. reuteri (strain JCM 1112) (Lactobacillus reuteri).